The chain runs to 340 residues: Delta-aminolevulinic acid dehydratase (340 aa).

Positions 134, 136, and 144 each coordinate Zn(2+). The active-site Schiff-base intermediate with substrate is the lysine 211. Residues arginine 221 and arginine 233 each coordinate 5-aminolevulinate. The Schiff-base intermediate with substrate role is filled by lysine 264. 5-aminolevulinate is bound by residues serine 291 and tyrosine 330.

Belongs to the ALAD family. In terms of assembly, homooctamer. Requires Zn(2+) as cofactor.

The catalysed reaction is 2 5-aminolevulinate = porphobilinogen + 2 H2O + H(+). It functions in the pathway porphyrin-containing compound metabolism; protoporphyrin-IX biosynthesis; coproporphyrinogen-III from 5-aminolevulinate: step 1/4. Its function is as follows. Catalyzes an early step in the biosynthesis of tetrapyrroles. Binds two molecules of 5-aminolevulinate per subunit, each at a distinct site, and catalyzes their condensation to form porphobilinogen. The chain is Delta-aminolevulinic acid dehydratase (HEM2) from Eremothecium gossypii (strain ATCC 10895 / CBS 109.51 / FGSC 9923 / NRRL Y-1056) (Yeast).